Here is a 188-residue protein sequence, read N- to C-terminus: Ras-related protein Rap-1 (188 aa).

10-17 (GSGGVGKS) contributes to the GTP binding site. Residues 32–40 (YDPTIEDSY) carry the Effector region motif. Residues 57–61 (DTAGT) and 116–119 (NKCD) each bind GTP.

Belongs to the small GTPase superfamily. Ras family.

It carries out the reaction GTP + H2O = GDP + phosphate + H(+). In terms of biological role, required in the hypodermis for proper formation of the cuticle. The polypeptide is Ras-related protein Rap-1 (rap-1) (Caenorhabditis elegans).